The sequence spans 423 residues: Gamma-glutamyl phosphate reductase (423 aa).

This sequence belongs to the gamma-glutamyl phosphate reductase family.

The protein resides in the cytoplasm. It carries out the reaction L-glutamate 5-semialdehyde + phosphate + NADP(+) = L-glutamyl 5-phosphate + NADPH + H(+). The protein operates within amino-acid biosynthesis; L-proline biosynthesis; L-glutamate 5-semialdehyde from L-glutamate: step 2/2. Catalyzes the NADPH-dependent reduction of L-glutamate 5-phosphate into L-glutamate 5-semialdehyde and phosphate. The product spontaneously undergoes cyclization to form 1-pyrroline-5-carboxylate. This chain is Gamma-glutamyl phosphate reductase, found in Pseudomonas putida (strain W619).